Here is a 203-residue protein sequence, read N- to C-terminus: V-type ATP synthase subunit D (203 aa).

It belongs to the V-ATPase D subunit family.

Functionally, produces ATP from ADP in the presence of a proton gradient across the membrane. This is V-type ATP synthase subunit D from Thermotoga neapolitana (strain ATCC 49049 / DSM 4359 / NBRC 107923 / NS-E).